A 201-amino-acid polypeptide reads, in one-letter code: Inosine triphosphate pyrophosphatase (201 aa).

Residue 16–21 (TGNAKK) coordinates ITP. Mg(2+) is bound at residue E44. Residues K56, 72-73 (DT), K89, 148-151 (FGWD), K171, and 176-177 (HR) each bind ITP.

It belongs to the HAM1 NTPase family. Homodimer. Mg(2+) is required as a cofactor. It depends on Mn(2+) as a cofactor.

The protein resides in the cytoplasm. The catalysed reaction is ITP + H2O = IMP + diphosphate + H(+). It carries out the reaction dITP + H2O = dIMP + diphosphate + H(+). The enzyme catalyses XTP + H2O = XMP + diphosphate + H(+). Pyrophosphatase that hydrolyzes non-canonical purine nucleotides such as inosine triphosphate (ITP), deoxyinosine triphosphate (dITP) or xanthosine 5'-triphosphate (XTP) to their respective monophosphate derivatives. The enzyme does not distinguish between the deoxy- and ribose forms. Probably excludes non-canonical purines from RNA and DNA precursor pools, thus preventing their incorporation into RNA and DNA and avoiding chromosomal lesions. This Sorghum bicolor (Sorghum) protein is Inosine triphosphate pyrophosphatase.